A 337-amino-acid polypeptide reads, in one-letter code: Pyridoxal 5'-phosphate synthase subunit PdxS (337 aa).

Position 65 (Asp65) interacts with D-ribose 5-phosphate. Catalysis depends on Lys122, which acts as the Schiff-base intermediate with D-ribose 5-phosphate. Gly194 lines the D-ribose 5-phosphate pocket. Residue Lys206 coordinates D-glyceraldehyde 3-phosphate. Residues Gly255 and 276 to 277 contribute to the D-ribose 5-phosphate site; that span reads GS.

It belongs to the PdxS/SNZ family. In terms of assembly, in the presence of PdxT, forms a dodecamer of heterodimers.

It catalyses the reaction aldehydo-D-ribose 5-phosphate + D-glyceraldehyde 3-phosphate + L-glutamine = pyridoxal 5'-phosphate + L-glutamate + phosphate + 3 H2O + H(+). It functions in the pathway cofactor biosynthesis; pyridoxal 5'-phosphate biosynthesis. Its function is as follows. Catalyzes the formation of pyridoxal 5'-phosphate from ribose 5-phosphate (RBP), glyceraldehyde 3-phosphate (G3P) and ammonia. The ammonia is provided by the PdxT subunit. Can also use ribulose 5-phosphate and dihydroxyacetone phosphate as substrates, resulting from enzyme-catalyzed isomerization of RBP and G3P, respectively. The protein is Pyridoxal 5'-phosphate synthase subunit PdxS of Metallosphaera sedula (strain ATCC 51363 / DSM 5348 / JCM 9185 / NBRC 15509 / TH2).